The sequence spans 366 residues: MNKVVLLCRPGFEKECAAEITDKAGQREIFGFARVKENSGYVIYECYQPDDGDKLIRELPFSSLIFARQWFVVGELLQHLPPEDRITPIVGMLQGVVEKGGELRVEVADTNESKELLKFCRKFTVPLRAALRDAGVLANYETPKRPVVHVFFIAPGCCYTGYSYSNNNSPFYMGIPRLKFPAEAPSRSTLKLEEAFHVFIPADEWDERLANGMWAVDLGACPGGWTYQLVKRNMWVYSVDNGPMAQSLMDTGQVTWLREDGFKFRPTRSNISWMVCDMVEKPAKVAALMAQWLVNGWCRETIFNLKLPMKKRYEEVSHNLAYIQAQLDEHGINAQIQARQLYHDREEVTVHVRRIWAAVGGRRDER.

S-adenosyl-L-methionine contacts are provided by residues Ser-188, 221 to 224 (CPGG), Asp-240, Asp-260, and Asp-277. Lys-306 acts as the Proton acceptor in catalysis.

This sequence belongs to the class I-like SAM-binding methyltransferase superfamily. RNA methyltransferase RlmE family. RlmM subfamily. As to quaternary structure, monomer.

It is found in the cytoplasm. The enzyme catalyses cytidine(2498) in 23S rRNA + S-adenosyl-L-methionine = 2'-O-methylcytidine(2498) in 23S rRNA + S-adenosyl-L-homocysteine + H(+). Functionally, catalyzes the 2'-O-methylation at nucleotide C2498 in 23S rRNA. This Shigella boydii serotype 4 (strain Sb227) protein is Ribosomal RNA large subunit methyltransferase M.